A 755-amino-acid chain; its full sequence is Tryptophan 2-monooxygenase (755 aa).

Positions 247, 267, 275, and 295 each coordinate FMN. Arginine 295 contributes to the substrate binding site.

The protein belongs to the tryptophan 2-monooxygenase family. Requires FMN as cofactor.

The enzyme catalyses L-tryptophan + O2 = indole-3-acetamide + CO2 + H2O. Its pathway is plant hormone metabolism; auxin biosynthesis. In Rhizobium radiobacter (Agrobacterium tumefaciens), this protein is Tryptophan 2-monooxygenase (tms1).